The chain runs to 265 residues: Osteoclast-associated immunoglobulin-like receptor (265 aa).

The first 18 residues, 1-18 (MVLSLILQLSTLWPACRA), serve as a signal peptide directing secretion. Residues 19 to 231 (DFTPTAPLAS…LDYTQGNLIR (213 aa)) lie on the Extracellular side of the membrane. 2 consecutive Ig-like domains span residues 22–115 (PTAP…SQPS) and 125–218 (QLPR…SFEG). N-linked (GlcNAc...) asparagine glycosylation is present at N47. C52 and C99 are oxidised to a cystine. N144 carries an N-linked (GlcNAc...) asparagine glycan. The helical transmembrane segment at 232–248 (LGLAGMVLICLGIIVTC) threads the bilayer. The Cytoplasmic portion of the chain corresponds to 249–265 (DWHSRSSAFDGLLPQQN).

This sequence belongs to the leukocyte receptor complex/polymeric immunoglobulin receptor (PIR/LRC) family. In terms of tissue distribution, specifically expressed in preosteoclasts or mature osteoclasts.

It is found in the cell membrane. Its function is as follows. Regulator of osteoclastogenesis which plays an important bone-specific function in osteoclast differentiation. This is Osteoclast-associated immunoglobulin-like receptor (Oscar) from Mus musculus (Mouse).